The following is a 128-amino-acid chain: Large-conductance mechanosensitive channel (128 aa).

Transmembrane regions (helical) follow at residues 11–31 (FALK…AAFG) and 70–90 (GAFI…FIFV).

This sequence belongs to the MscL family. In terms of assembly, homopentamer.

It is found in the cell membrane. Its function is as follows. Channel that opens in response to stretch forces in the membrane lipid bilayer. May participate in the regulation of osmotic pressure changes within the cell. The chain is Large-conductance mechanosensitive channel from Listeria monocytogenes serotype 4a (strain HCC23).